We begin with the raw amino-acid sequence, 157 residues long: Probable succinate transporter subunit YjjB (157 aa).

The next 4 helical transmembrane spans lie at Leu-8–Phe-28, Met-50–Gly-70, Val-87–Ile-107, and Phe-129–Trp-149.

It belongs to the ThrE exporter (TC 2.A.79) family. As to quaternary structure, the transporter is composed of YjjB and YjjP.

The protein resides in the cell inner membrane. Its function is as follows. Involved in succinate export with YjjP. Both proteins are required for export. In Escherichia coli O157:H7 (strain EC4115 / EHEC), this protein is Probable succinate transporter subunit YjjB.